A 149-amino-acid chain; its full sequence is uncharacterized protein (149 aa).

Residues 124–144 form a helical membrane-spanning segment; the sequence is IIIIALIIILANYAPSIIGKI.

It belongs to the M.jannaschii MJ0023/MJ0349/MJ1072/MJ1074/MJ1107/MJECL16 family.

Its subcellular location is the membrane. This is an uncharacterized protein from Methanocaldococcus jannaschii (strain ATCC 43067 / DSM 2661 / JAL-1 / JCM 10045 / NBRC 100440) (Methanococcus jannaschii).